Reading from the N-terminus, the 188-residue chain is ATP synthase subunit b 2 (188 aa).

The chain crosses the membrane as a helical span at residues 41–61 (FFWLVISFGFFYFFIARVIVP).

This sequence belongs to the ATPase B chain family. In terms of assembly, F-type ATPases have 2 components, F(1) - the catalytic core - and F(0) - the membrane proton channel. F(1) has five subunits: alpha(3), beta(3), gamma(1), delta(1), epsilon(1). F(0) has three main subunits: a(1), b(2) and c(10-14). The alpha and beta chains form an alternating ring which encloses part of the gamma chain. F(1) is attached to F(0) by a central stalk formed by the gamma and epsilon chains, while a peripheral stalk is formed by the delta and b chains.

The protein resides in the cell inner membrane. Functionally, f(1)F(0) ATP synthase produces ATP from ADP in the presence of a proton or sodium gradient. F-type ATPases consist of two structural domains, F(1) containing the extramembraneous catalytic core and F(0) containing the membrane proton channel, linked together by a central stalk and a peripheral stalk. During catalysis, ATP synthesis in the catalytic domain of F(1) is coupled via a rotary mechanism of the central stalk subunits to proton translocation. Component of the F(0) channel, it forms part of the peripheral stalk, linking F(1) to F(0). The b'-subunit is a diverged and duplicated form of b found in plants and photosynthetic bacteria. The chain is ATP synthase subunit b 2 (atpF2) from Bartonella bacilliformis (strain ATCC 35685 / KC583 / Herrer 020/F12,63).